The primary structure comprises 529 residues: Plexin domain-containing protein 2 (529 aa).

The first 30 residues, 1 to 30 (MARFPKADLAAAGVMLLCHFFTDQFQFADG), serve as a signal peptide directing secretion. At 31–454 (KPGDQILDWQ…AEKKGGTLHA (424 aa)) the chain is on the extracellular side. Positions 80-104 (ASVGQDSPEPRSFTDLLLDDGQDNN) are disordered. 2 N-linked (GlcNAc...) asparagine glycosylation sites follow: N103 and N160. Residues 327–372 (TCLQFNRCGPCVSSQIGFNCSWCSKLQRCSSGFDRHRQDWVDSGCP) enclose the PSI domain. Residues 455 to 475 (GLIIGILILVLIVATAILVTV) form a helical membrane-spanning segment. Residues 476–529 (YMYHHPTSAASIFFIERRPSRWPAMKFRRGSGHPAYAEVEPVGEKEGFIVSEQC) are Cytoplasmic-facing. Residue S506 is modified to Phosphoserine.

It belongs to the plexin family. As to quaternary structure, interacts with CTTN. As to expression, expressed in the endothelial cells of the stroma but not in the endothelial cells of normal colonic tissue.

The protein resides in the membrane. May play a role in tumor angiogenesis. The protein is Plexin domain-containing protein 2 (PLXDC2) of Homo sapiens (Human).